The chain runs to 76 residues: DNA-directed RNA polymerase subunit epsilon (76 aa).

This sequence belongs to the RNA polymerase subunit epsilon family. As to quaternary structure, RNAP is composed of a core of 2 alpha, a beta and a beta' subunit. The core is associated with a delta subunit, and at least one of epsilon or omega. When a sigma factor is associated with the core the holoenzyme is formed, which can initiate transcription.

The catalysed reaction is RNA(n) + a ribonucleoside 5'-triphosphate = RNA(n+1) + diphosphate. In terms of biological role, a non-essential component of RNA polymerase (RNAP). The polypeptide is DNA-directed RNA polymerase subunit epsilon (Streptococcus mutans serotype c (strain ATCC 700610 / UA159)).